We begin with the raw amino-acid sequence, 235 residues long: 2,3,4,5-tetrahydropyridine-2,6-dicarboxylate N-acetyltransferase (235 aa).

It belongs to the transferase hexapeptide repeat family. DapH subfamily.

The enzyme catalyses (S)-2,3,4,5-tetrahydrodipicolinate + acetyl-CoA + H2O = L-2-acetamido-6-oxoheptanedioate + CoA. It participates in amino-acid biosynthesis; L-lysine biosynthesis via DAP pathway; LL-2,6-diaminopimelate from (S)-tetrahydrodipicolinate (acetylase route): step 1/3. Catalyzes the transfer of an acetyl group from acetyl-CoA to tetrahydrodipicolinate. The sequence is that of 2,3,4,5-tetrahydropyridine-2,6-dicarboxylate N-acetyltransferase from Exiguobacterium sp. (strain ATCC BAA-1283 / AT1b).